A 209-amino-acid chain; its full sequence is MPVAVMAESAFSFKKLLDQCENQELEAPGGIATPPVYGQLLALYLLHNDMNNARYLWKRIPPAIKSANSELGGIWSVGQRIWQRDFPGIYTTINAHQWSETVQPIMEALRDATRRRAFALVSQAYTSIIADDFAAFVGLPVEEAVKGILEQGWQADSTTRMVLPRKPVAGALDVSFNKFIPLSEPAPVPPIPNEQQLARLTDYVAFLEN.

The region spanning glutamate 8–phenylalanine 179 is the PCI domain. Serine 175 is subject to Phosphoserine.

It belongs to the CSN8 family. Component of the CSN complex, composed of COPS1/GPS1, COPS2, COPS3, COPS4, COPS5, COPS6, COPS7 (COPS7A or COPS7B), COPS8 and COPS9 isoform 1. In the complex, it probably interacts directly with COPS3, COPS4 and COPS7 (COPS7A or COPS7B).

It localises to the cytoplasm. It is found in the nucleus. Component of the COP9 signalosome complex (CSN), a complex involved in various cellular and developmental processes. The CSN complex is an essential regulator of the ubiquitin (Ubl) conjugation pathway by mediating the deneddylation of the cullin subunits of SCF-type E3 ligase complexes, leading to decrease the Ubl ligase activity of SCF-type complexes such as SCF, CSA or DDB2. The complex is also involved in phosphorylation of p53/TP53, c-jun/JUN, IkappaBalpha/NFKBIA, ITPK1 and IRF8/ICSBP, possibly via its association with CK2 and PKD kinases. CSN-dependent phosphorylation of TP53 and JUN promotes and protects degradation by the Ubl system, respectively. The protein is COP9 signalosome complex subunit 8 (COPS8) of Homo sapiens (Human).